We begin with the raw amino-acid sequence, 788 residues long: Auxin response factor 4 (788 aa).

The segment covering 1–19 has biased composition (acidic residues); it reads MEFDLNTEIAEVEEEENDD. The segment at 1-53 is disordered; sequence MEFDLNTEIAEVEEEENDDVGVGVGGGTRIDKGRLGISPSSSSSCSSGSSSSS. Over residues 38-53 the composition is skewed to low complexity; that stretch reads SPSSSSSCSSGSSSSS. The segment at residues 177 to 279 is a DNA-binding region (TF-B3); the sequence is FCKTLTASDT…ELRLGIRRAA (103 aa). The disordered stretch occupies residues 413–433; the sequence is LSIQSSPRPKRPWAGLLDTTP. A PB1 domain is found at 665 to 747; it reads RICTKVHKQG…VVWKIHLYTK (83 aa).

This sequence belongs to the ARF family. Homodimers and heterodimers. In terms of tissue distribution, expressed in the whole plant.

The protein localises to the nucleus. Its function is as follows. Auxin response factors (ARFs) are transcriptional factors that bind specifically to the DNA sequence 5'-TGTCTC-3' found in the auxin-responsive promoter elements (AuxREs). Could act as transcriptional activator or repressor. Formation of heterodimers with Aux/IAA proteins may alter their ability to modulate early auxin response genes expression. This chain is Auxin response factor 4 (ARF4), found in Arabidopsis thaliana (Mouse-ear cress).